We begin with the raw amino-acid sequence, 3023 residues long: Genome polyprotein (3023 aa).

Basic residues predominate over residues 1-21 (MSTLPKPKRQTKRNTLRRPKN). The residue at position 2 (Ser-2) is an N-acetylserine; by host. Residues 2 to 23 (STLPKPKRQTKRNTLRRPKNVK) are interaction with STAT1. The interaction with EIF2AK2/PKR stretch occupies residues 2-58 (STLPKPKRQTKRNTLRRPKNVKFPAGGQIVGEVYVLPRRGPQLGVREVRKTSERSQP). Positions 2–59 (STLPKPKRQTKRNTLRRPKNVKFPAGGQIVGEVYVLPRRGPQLGVREVRKTSERSQPR) are interaction with DDX3X. Residues 2–75 (STLPKPKRQT…PKARPREGRS (74 aa)) are disordered. Residues 2 to 168 (STLPKPKRQT…EDGVNYATGN (167 aa)) are Cytoplasmic-facing. Short sequence motifs (nuclear localization signal) lie at residues 5–13 (PKPKRQTKR) and 38–43 (PRRGPQ). Basic and acidic residues predominate over residues 47-57 (REVRKTSERSQ). Ser-53 carries the post-translational modification Phosphoserine; by host. 2 consecutive short sequence motifs (nuclear localization signal) follow at residues 58–64 (PRGRRQP) and 66–71 (PKARPR). The tract at residues 112 to 152 (PRRRSRNLGKVIDTLTCGFADLMGYIPLIGAPVGGVARALA) is important for endoplasmic reticulum and mitochondrial localization. Ser-116 is modified (phosphoserine; by host). The segment at 122–173 (VIDTLTCGFADLMGYIPLIGAPVGGVARALAHGVRALEDGVNYATGNLPGCS) is interaction with APOA2. The important for lipid droplets localization stretch occupies residues 164-167 (YATG). Residues 169-189 (LPGCSFSIFLLALFSCLTCPA) traverse the membrane as a helical segment. Positions 178–191 (LLALFSCLTCPASS) are cleaved as a propeptide — ER anchor for the core protein, removed in mature form by host signal peptidase. Residues 190–359 (SSLEYRNASG…VGAHWGVMAG (170 aa)) are Lumenal-facing. 3 N-linked (GlcNAc...) asparagine; by host glycosylation sites follow: Asn-196, Asn-209, and Asn-235. Residues 266-297 (LVAPPTLCSALYVEDAFGAVSLVGQAFTFRPR) are important for fusion. Asn-306 is a glycosylation site (N-linked (GlcNAc...) asparagine; by host). The chain crosses the membrane as a helical span at residues 360 to 380 (LAYFSMQGNWAKVVIVLIMFS). Over 381–733 (GVDATTHTTG…WEFVVLVFLL (353 aa)) the chain is Lumenal. Residues 386 to 413 (THTTGGSAAQATAGFTSFFTRGPSQNLQ) are HVR1. 3 N-linked (GlcNAc...) (high mannose) asparagine; by host glycosylation sites follow: Asn-418, Asn-424, and Asn-431. Cystine bridges form between Cys-430/Cys-554, Cys-453/Cys-460, Cys-488/Cys-496, and Cys-505/Cys-510. N-linked (GlcNAc...) asparagine; by host glycosylation is present at Asn-449. Residues 476–480 (ANING) are HVR2. Asn-477 carries an N-linked (GlcNAc...) asparagine; by host glycan. Residues 482–495 (SEDRPYCWHYPPRP) are CD81-binding 1. An N-linked (GlcNAc...) asparagine; by host glycan is attached at Asn-534. The tract at residues 546–553 (PPQGRWFG) is CD81-binding 2. Asn-558 is a glycosylation site (N-linked (GlcNAc...) asparagine; by host). Cystine bridges form between Cys-566-Cys-571, Cys-589-Cys-593, Cys-605-Cys-628, and Cys-615-Cys-652. Asn-631 and Asn-653 each carry an N-linked (GlcNAc...) (high mannose) asparagine; by host glycan. Cys-660 and Cys-685 are oxidised to a cystine. Residues 668–679 (SEQQPLLHSTTD) form a PKR/eIF2-alpha phosphorylation homology domain (PePHD) region. A helical membrane pass occupies residues 734–754 (LADARVCVALWMMLLISQAEA). Residues 755 to 765 (AMENLVMLNAL) lie on the Lumenal side of the membrane. A helical transmembrane segment spans residues 766–786 (SAAGQQGYVWYLVAFCAAWHI). The Cytoplasmic portion of the chain corresponds to 787–790 (RGKL). A helical membrane pass occupies residues 791 to 811 (VPLITYGLTGLWPLALLDLLL). At 812–821 (PQRAYAWTGE) the chain is on the lumenal side. A helical transmembrane segment spans residues 822-842 (DDATIGAGVLLLLGFFTLSPW). Over 843-889 (YKHWIGRLIWWNQYAICRGEAALQVWVPPLLVRGSRDSVILLASLLY) the chain is Cytoplasmic. A helical transmembrane segment spans residues 890 to 910 (PSLIFDITKLLIAVLGPLYLI). Residues 907 to 1034 (LYLIQAALTS…DYKKMGWRLL (128 aa)) form the Peptidase C18 domain. Residues 911–936 (QAALTSTPYFVRAHVLIRICMLVRSA) are Lumenal-facing. The protease NS2-3 stretch occupies residues 912-1214 (AALTSTPYFV…PVETLSTQVR (303 aa)). Cys-930 is lipidated: S-palmitoyl cysteine; by host. Residues 937-957 (MGGKYVQMAVLTVGRWFNTYL) traverse the membrane as a helical segment. The tract at residues 937–957 (MGGKYVQMAVLTVGRWFNTYL) is interaction with host SCPS1. At 958 to 1665 (YDHLSPIQDW…CMSADLEVTT (708 aa)) the chain is on the cytoplasmic side. Active-site for protease NS2 activity; shared with dimeric partner residues include His-960, Glu-980, and Cys-1001. The 182-residue stretch at 1035–1216 (SPISAYAQQT…ETLSTQVRSP (182 aa)) folds into the Peptidase S29 domain. Catalysis depends on charge relay system; for serine protease NS3 activity residues His-1091 and Asp-1115. Zn(2+) contacts are provided by Cys-1131 and Cys-1133. The active-site Charge relay system; for serine protease NS3 activity is Ser-1173. The Zn(2+) site is built by Cys-1179 and His-1183. Positions 1225-1377 (PAVPESYQVG…PNIEEVGLTS (153 aa)) constitute a Helicase ATP-binding domain. Residue 1238 to 1245 (APTGSGKS) coordinates ATP. Residues Ser-1245 and Glu-1325 each contribute to the Mg(2+) site. A DECH box motif is present at residues 1324 to 1327 (DECH). Residues 1387–1546 (ALPLAMIKGG…DLQPAETTVR (160 aa)) enclose the Helicase C-terminal domain. Residues 1494 to 1506 (QRRGRTGRGRPGI) are RNA-binding. A helical transmembrane segment spans residues 1666–1686 (SAWVLVGGVLAALAAYCLSVG). Residues 1687 to 1698 (CVVIVGHIELGG) are NS3-binding. The Cytoplasmic segment spans residues 1687-1813 (CVVIVGHIEL…SVTSPLTTNQ (127 aa)). A helical transmembrane segment spans residues 1814–1834 (TMFFNILGGWVATHLAGPAAS). Topologically, residues 1835-1836 (SA) are lumenal. A helical transmembrane segment spans residues 1837–1857 (FVVSGLAGAAVGGIGIGRVLL). Position 1858 (Asp-1858) is a topological domain, cytoplasmic. The chain crosses the membrane as a helical span at residues 1859-1879 (VLAGYGAGVSGALVAFKIMGG). Residues 1880–1889 (ELPTTEDMVN) lie on the Lumenal side of the membrane. Residues 1890–1910 (LLPAILSPGALVVGVICAAVL) form a helical membrane-spanning segment. Topologically, residues 1911–1980 (RRHVGPGEGA…WINEDYPSPC (70 aa)) are cytoplasmic. A lipid anchor (S-palmitoyl cysteine; by host) is attached at Cys-1980. The stretch at 1981 to 2010 (NGDWLHDIWDWVCIVLSDFKTWLSAKIMPK) is an intramembrane region. The Cytoplasmic segment spans residues 2011 to 3002 (VPGIPFLSCQ…YHSVSRARTR (992 aa)). Zn(2+)-binding residues include Cys-2019, Cys-2037, Cys-2039, and Cys-2060. Residues 2128-2216 (EFFTELDGVR…ASSSASQLSA (89 aa)) form an FKBP8-binding region. A transcriptional activation region spans residues 2128–2340 (EFFTELDGVR…PVPPPRRKRT (213 aa)). Positions 2143 to 2147 (PPCKP) are interaction with non-structural protein 4A. Residues 2195–2218 (ARRLARGSPPSEASSSASQLSAPS) are compositionally biased toward low complexity. The tract at residues 2195-2226 (ARRLARGSPPSEASSSASQLSAPSLKATCQTH) is disordered. The interaction with host SKP2 stretch occupies residues 2197 to 2450 (RLARGSPPSE…AIITPCSAEE (254 aa)). Phosphoserine; by host is present on residues Ser-2202, Ser-2205, Ser-2209, Ser-2212, Ser-2215, and Ser-2218. An ISDR region spans residues 2218–2257 (SLKATCQTHRPHPDAELIDANLLWRQEMGSNITRVESETK). Residues 2218 to 2283 (SLKATCQTHR…TELSIPAECF (66 aa)) are interaction with EIF2AK2/PKR. Positions 2257–2314 (KVVILDSFEPLRAEEDDTELSIPAECFKKPPKYPPALPIWARPDYNPPLLPSWKDPTY) are NS4B-binding. The interval 2307 to 2385 (PSWKDPTYEP…GTESTAESGD (79 aa)) is V3. Disordered stretches follow at residues 2320 to 2344 (HGCA…IKLD) and 2357 to 2422 (ERSF…STVS). The short motif at 2330-2333 (APVP) is the SH3-binding element. A Nuclear localization signal motif is present at residues 2335-2343 (PRRKRTIKL). The span at 2366–2384 (EGTGTSSSGVGTESTAESG) shows a compositional bias: low complexity. Ser-2461 and Ser-2474 each carry phosphoserine; by host. In terms of domain architecture, RdRp catalytic spans 2646-2764 (PLGFSYDTRC…ISESCGVEED (119 aa)). Residues Asp-2652, Asp-2750, and Asp-2751 each contribute to the Mg(2+) site. Residues 3003 to 3023 (HLLLCLLLLTVGVGIFLLPAR) form a helical membrane-spanning segment.

The protein belongs to the hepacivirus polyprotein family. Homooligomer. Interacts with E1 (via C-terminus). Interacts with the non-structural protein 5A. Interacts (via N-terminus) with host STAT1 (via SH2 domain); this interaction results in decreased STAT1 phosphorylation and ubiquitin-mediated proteasome-dependent STAT1 degradation, leading to decreased IFN-stimulated gene transcription. Interacts with host STAT3; this interaction constitutively activates STAT3. Interacts with host LTBR receptor. Interacts with host TNFRSF1A receptor and possibly induces apoptosis. Interacts with host HNRPK. Interacts with host YWHAE. Interacts with host UBE3A/E6AP. Interacts with host DDX3X. Interacts with host APOA2. Interacts with host RXRA protein. Interacts with host SP110 isoform 3/Sp110b; this interaction sequesters the transcriptional corepressor SP110 away from the nucleus. Interacts with host CREB3 nuclear transcription protein; this interaction triggers cell transformation. Interacts with host ACY3. Interacts with host C1QR1. Interacts with host RBM24; this interaction, which enhances the interaction of the mature core protein with 5'-UTR, may inhibit viral translation and favor replication. Interacts with host EIF2AK2/PKR; this interaction induces the autophosphorylation of EIF2AK2. Part of the viral assembly initiation complex composed of NS2, E1, E2, NS3, NS4A, NS5A and the mature core protein. As to quaternary structure, forms a heterodimer with envelope glycoprotein E2. Interacts with mature core protein. Interacts with protease NS2. The heterodimer E1/E2 interacts with host CLDN1; this interaction plays a role in viral entry into host cell. Interacts with host SPSB2 (via C-terminus). Part of the viral assembly initiation complex composed of NS2, E1, E2, NS3, NS4A, NS5A and the mature core protein. Interacts with host NEURL3; this interaction prevents E1 binding to glycoprotein E2. In terms of assembly, forms a heterodimer with envelope glycoprotein E1. Interacts with host CD81 and SCARB1 receptors; these interactions play a role in viral entry into host cell. Interacts with host EIF2AK2/PKR; this interaction inhibits EIF2AK2 and probably allows the virus to evade the innate immune response. Interacts with host CD209/DC-SIGN and CLEC4M/DC-SIGNR. Interact with host SPCS1; this interaction is essential for viral particle assembly. Interacts with protease NS2. The heterodimer E1/E2 interacts with host CLDN1; this interaction plays a role in viral entry into host cell. Part of the viral assembly initiation complex composed of NS2, E1, E2, NS3, NS4A, NS5A and the mature core protein. Interacts with host SLC3A2/4F2hc; the interaction may facilitate viral entry into host cell. Interacts with human PLSCR1. Homohexamer. Homoheptamer. Interacts with protease NS2. As to quaternary structure, homodimer. Interacts with host SPCS1; this interaction is essential for viral particle assembly. Interacts with envelope glycoprotein E1. Interacts with envelope glycoprotein E2. Interacts with viroporin p7. Interacts with serine protease/helicase NS3. Part of the replication complex composed of NS2, NS3, NS4A, NS4B, NS5A and the RNA-directed RNA polymerase embedded in an ER-derived membranous web. Part of the viral assembly initiation complex composed of NS2, E1, E2, NS3, NS4A, NS5A and the mature core protein. In terms of assembly, interacts with protease NS2. Interacts with non-structural protein 4A; this interaction stabilizes the folding of NS3 serine protease. NS3-NS4A interaction is essential for NS3 activation and allows membrane anchorage of the latter. NS3/NS4A complex also prevents phosphorylation of host IRF3, thus preventing the establishment of dsRNA induced antiviral state. Interacts with host MAVS; this interaction leads to the cleavage and inhibition of host MAVS. Interacts with host TICAM1; this interaction leads to the cleavage and inhibition of host TICAM1. Interacts with host TANK-binding kinase/TBK1; this interaction results in the inhibition of the association between TBK1 and IRF3, which leads to the inhibition of IRF3 activation. Interacts with host RBM24. Part of the replication complex composed of NS2, NS3, NS4A, NS4B, NS5A and the RNA-directed RNA polymerase embedded in an ER-derived membranous web. Part of the viral assembly initiation complex composed of NS2, E1, E2, NS3, NS4A, NS5A and the mature core protein. Interacts with NS3 serine protease; this interaction stabilizes the folding of NS3 serine protease. NS3-NS4A interaction is essential for NS3 activation and allows membrane anchorage of the latter. Interacts with non-structural protein 5A (via N-terminus). Part of the replication complex composed of NS2, NS3, NS4A, NS4B, NS5A and the RNA-directed RNA polymerase embedded in an ER-derived membranous web. Part of the viral assembly initiation complex composed of NS2, E1, E2, NS3, NS4A, NS5A and the mature core protein. As to quaternary structure, homomultimer. Interacts with non-structural protein NS5A. Interacts with host PLA2G4C; this interaction likely initiates the recruitment of replication complexes to lipid droplets. Interacts with host STING; this interaction disrupts the interaction between STING and TBK1 thereby suppressing the interferon signaling. Part of the replication complex composed of NS2, NS3, NS4A, NS4B, NS5A and the RNA-directed RNA polymerase embedded in an ER-derived membranous web. In terms of assembly, monomer. Homodimer; dimerization is required for RNA-binding. Interacts with the mature core protein. Interacts (via N-terminus) with non-structural protein 4A. Interacts with non-structural protein 4B. Interacts (via region D2) with RNA-directed RNA polymerase. Part of the viral assembly initiation complex composed of NS2, E1, E2, NS3, NS4A, NS5A and the mature core protein. Part of the replication complex composed of NS2, NS3, NS4A, NS4B, NS5A and the RNA-directed RNA polymerase embedded in an ER-derived membranous web. Interacts with host GRB2. Interacts with host BIN1. Interacts with host PIK3R1. Interacts with host SRCAP. Interacts with host FKBP8. Interacts (via C-terminus) with host VAPB (via MSP domain). Interacts with host EIF2AK2/PKR; this interaction leads to disruption of EIF2AK2 dimerization by NS5A and probably allows the virus to evade the innate immune response. Interacts (via N-terminus) with host PACSIN2 (via N-terminus); this interaction attenuates protein kinase C alpha-mediated phosphorylation of PACSIN2 by disrupting the interaction between PACSIN2 and PRKCA. Interacts (via N-terminus) with host SRC kinase (via SH2 domain). Interacts with most Src-family kinases. Interacts with host IFI27 and SKP2; promotes the ubiquitin-mediated proteasomal degradation of NS5A. Interacts with host GPS2. Interacts with host TNFRSF21; this interaction allows the modulation by the virus of JNK, p38 MAPK, STAT3, and Akt signaling pathways in a DR6-dependent manner. Interacts (via N-terminus) with host CIDEB (via N-terminus); this interaction seems to regulate the association of HCV particles with APOE. Interacts with host CHKA/Choline Kinase-alpha; CHKA bridges host PI4KA and NS5A and potentiates NS5A-stimulated PI4KA activity, which then facilitates the targeting of the ternary complex to the ER for viral replication. Interacts with host SPSB2 (via C-terminus); this interaction targets NS5A for ubiquitination and degradation. Interacts with host RAB18; this interaction may promote the association of NS5A and other replicase components with lipid droplets. Interacts (via region D2) with host PPIA/CYPA; the interaction stimulates RNA-binding ability of NS5A and is dependent on the peptidyl-prolyl cis-trans isomerase activity of PPIA/CYPA. Interacts with host TRIM14; this interaction induces the degradation of NS5A. Homooligomer. Interacts with non-structural protein 5A. Interacts with host VAPB. Interacts with host PRK2/PKN2. Interacts with host HNRNPA1 and SEPT6; these interactions facilitate viral replication. Part of the replication complex composed of NS2, NS3, NS4A, NS4B, NS5A and the RNA-directed RNA polymerase. The cofactor is Zn(2+). Requires Mg(2+) as cofactor. Post-translationally, specific enzymatic cleavages in vivo yield mature proteins. The structural proteins, core, E1, E2 and p7 are produced by proteolytic processing by host signal peptidases. The core protein precursor is synthesized as a 23 kDa, which is retained in the ER membrane through the hydrophobic signal peptide. Cleavage by the signal peptidase releases the 21 kDa mature core protein. The cleavage of the core protein precursor occurs between aminoacids 176 and 188 but the exact cleavage site is not known. Some degraded forms of the core protein appear as well during the course of infection. The other proteins (p7, NS2, NS3, NS4A, NS4B, NS5A and NS5B) are cleaved by the viral proteases. Autoprocessing between NS2 and NS3 is mediated by the NS2 cysteine protease catalytic domain and regulated by the NS3 N-terminal domain. Phosphorylated by host PKC and PKA. In terms of processing, ubiquitinated; mediated by UBE3A and leading to core protein subsequent proteasomal degradation. Post-translationally, highly N-glycosylated. Palmitoylation is required for NS2/3 autoprocessing and E2 recruitment to membranes. In terms of processing, palmitoylated. This modification may play a role in its polymerization or in protein-protein interactions. Post-translationally, phosphorylated on serines in a basal form termed p56. p58 is a hyperphosphorylated form of p56. p56 and p58 coexist in the cell in roughly equivalent amounts. Hyperphosphorylation is dependent on the presence of NS4A. Host CSNK1A1/CKI-alpha or RPS6KB1 kinases may be responsible for NS5A phosphorylation. Tyrosine phosphorylation is essential for the interaction with host SRC. In terms of processing, the N-terminus is phosphorylated by host PRK2/PKN2.

The protein localises to the host endoplasmic reticulum membrane. It is found in the host mitochondrion membrane. Its subcellular location is the virion. It localises to the host cytoplasm. The protein resides in the host nucleus. The protein localises to the host lipid droplet. It is found in the virion membrane. Its subcellular location is the host mitochondrion. It localises to the host cell membrane. The protein resides in the host perinuclear region. It carries out the reaction Hydrolysis of four peptide bonds in the viral precursor polyprotein, commonly with Asp or Glu in the P6 position, Cys or Thr in P1 and Ser or Ala in P1'.. The catalysed reaction is a ribonucleoside 5'-triphosphate + H2O = a ribonucleoside 5'-diphosphate + phosphate + H(+). It catalyses the reaction ATP + H2O = ADP + phosphate + H(+). The enzyme catalyses RNA(n) + a ribonucleoside 5'-triphosphate = RNA(n+1) + diphosphate. With respect to regulation, inhibited by the antiviral drug hexamethylene amiloride. Inhibition by amantadine appears to be genotype-dependent. Also inhibited by long-alkyl-chain iminosugar derivatives. Activity is up-regulated by PRK2/PKN2-mediated phosphorylation. Functionally, packages viral RNA to form a viral nucleocapsid, and promotes virion budding. Participates in the viral particle production as a result of its interaction with the non-structural protein 5A. Binds RNA and may function as a RNA chaperone to induce the RNA structural rearrangements taking place during virus replication. Modulates viral translation initiation by interacting with viral IRES and 40S ribosomal subunit. Affects various cell signaling pathways, host immunity and lipid metabolism. Prevents the establishment of cellular antiviral state by blocking the interferon-alpha/beta (IFN-alpha/beta) and IFN-gamma signaling pathways and by blocking the formation of phosphorylated STAT1 and promoting ubiquitin-mediated proteasome-dependent degradation of STAT1. Activates STAT3 leading to cellular transformation. Regulates the activity of cellular genes, including c-myc and c-fos. May repress the promoter of p53, and sequester CREB3 and SP110 isoform 3/Sp110b in the cytoplasm. Represses cell cycle negative regulating factor CDKN1A, thereby interrupting an important check point of normal cell cycle regulation. Targets transcription factors involved in the regulation of inflammatory responses and in the immune response: suppresses TNF-induced NF-kappa-B activation, and activates AP-1. Binds to dendritic cells (DCs) via C1QR1, resulting in down-regulation of T-lymphocytes proliferation. Alters lipid metabolism by interacting with hepatocellular proteins involved in lipid accumulation and storage. Induces up-regulation of FAS promoter activity, and thereby contributes to the increased triglyceride accumulation in hepatocytes (steatosis). Its function is as follows. Forms a heterodimer with envelope glycoprotein E2, which mediates virus attachment to the host cell, virion internalization through clathrin-dependent endocytosis and fusion with host membrane. Fusion with the host cell is most likely mediated by both E1 and E2, through conformational rearrangements of the heterodimer required for fusion rather than a classical class II fusion mechanism. E1/E2 heterodimer binds host apolipoproteins such as APOB and ApoE thereby forming a lipo-viro-particle (LVP). APOE associated to the LVP allows the initial virus attachment to cell surface receptors such as the heparan sulfate proteoglycans (HSPGs), syndecan-1 (SDC1), syndecan-1 (SDC2), the low-density lipoprotein receptor (LDLR) and scavenger receptor class B type I (SCARB1). The cholesterol transfer activity of SCARB1 allows E2 exposure and binding of E2 to SCARB1 and the tetraspanin CD81. E1/E2 heterodimer binding on CD81 activates the epithelial growth factor receptor (EGFR) signaling pathway. Diffusion of the complex E1-E2-EGFR-SCARB1-CD81 to the cell lateral membrane allows further interaction with Claudin 1 (CLDN1) and occludin (OCLN) to finally trigger HCV entry. Forms a heterodimer with envelope glycoprotein E1, which mediates virus attachment to the host cell, virion internalization through clathrin-dependent endocytosis and fusion with host membrane. Fusion with the host cell is most likely mediated by both E1 and E2, through conformational rearrangements of the heterodimer required for fusion rather than a classical class II fusion mechanism. The interaction between envelope glycoprotein E2 and host apolipoprotein E/APOE allows the proper assembly, maturation and infectivity of the viral particles. This interaction is probably promoted via the up-regulation of cellular autophagy by the virus. E1/E2 heterodimer binds host apolipoproteins such as APOB and APOE thereby forming a lipo-viro-particle (LVP). APOE associated to the LVP allows the initial virus attachment to cell surface receptors such as the heparan sulfate proteoglycans (HSPGs), syndecan-1 (SDC1), syndecan-1 (SDC2), the low-density lipoprotein receptor (LDLR) and scavenger receptor class B type I (SCARB1). The cholesterol transfer activity of SCARB1 allows E2 exposure and binding of E2 to SCARB1 and the tetraspanin CD81. E1/E2 heterodimer binding on CD81 activates the epithelial growth factor receptor (EGFR) signaling pathway. Diffusion of the complex E1-E2-EGFR-SCARB1-CD81 to the cell lateral membrane allows further interaction with Claudin 1 (CLDN1) and occludin (OCLN) to finally trigger HCV entry. Inhibits host EIF2AK2/PKR activation, preventing the establishment of an antiviral state. Viral ligand for CD209/DC-SIGN and CLEC4M/DC-SIGNR, which are respectively found on dendritic cells (DCs), and on liver sinusoidal endothelial cells and macrophage-like cells of lymph node sinuses. These interactions allow the capture of circulating HCV particles by these cells and subsequent facilitated transmission to permissive cells such as hepatocytes and lymphocyte subpopulations. The interaction between E2 and host amino acid transporter complex formed by SLC3A2 and SLC7A5/LAT1 may facilitate viral entry into host cell. In terms of biological role, ion channel protein that acts as a viroporin and plays an essential role in the assembly, envelopment and secretion of viral particles. Regulates the host cell secretory pathway, which induces the intracellular retention of viral glycoproteins and favors assembly of viral particles. Creates a pore in acidic organelles and releases Ca(2+) and H(+) in the cytoplasm of infected cells, leading to a productive viral infection. High levels of cytoplasmic Ca(2+) may trigger membrane trafficking and transport of viral ER-associated proteins to viroplasms, sites of viral genome replication. This ionic imbalance induces the assembly of the inflammasome complex, which triggers the maturation of pro-IL-1beta into IL-1beta through the action of caspase-1. Targets also host mitochondria and induces mitochondrial depolarization. In addition of its role as a viroporin, acts as a lipid raft adhesion factor. Functionally, cysteine protease required for the proteolytic auto-cleavage between the non-structural proteins NS2 and NS3. The N-terminus of NS3 is required for the function of NS2 protease (active region NS2-3). Promotes the initiation of viral particle assembly by mediating the interaction between structural and non-structural proteins. Its function is as follows. Displays three enzymatic activities: serine protease with a chymotrypsin-like fold, NTPase and RNA helicase. NS3 serine protease, in association with NS4A, is responsible for the cleavages of NS3-NS4A, NS4A-NS4B, NS4B-NS5A and NS5A-NS5B. The NS3/NS4A complex prevents phosphorylation of host IRF3, thus preventing the establishment of dsRNA induced antiviral state. The NS3/NS4A complex induces host amino acid transporter component SLC3A2, thus contributing to HCV propagation. NS3 RNA helicase binds to RNA and unwinds both dsDNA and dsRNA in the 3' to 5' direction, and likely resolves RNA complicated stable secondary structures in the template strand. Binds a single ATP and catalyzes the unzipping of a single base pair of dsRNA. Inhibits host antiviral proteins TBK1 and IRF3 thereby preventing the establishment of an antiviral state. Cleaves host MAVS/CARDIF thereby preventing the establishment of an antiviral state. Cleaves host TICAM1/TRIF, thereby disrupting TLR3 signaling and preventing the establishment of an antiviral state. Peptide cofactor which forms a non-covalent complex with the N-terminal of NS3 serine protease. The NS3/NS4A complex prevents phosphorylation of host IRF3, thus preventing the establishment of dsRNA induced antiviral state. The NS3/NS4A complex induces host amino acid transporter component SLC3A2, thus contributing to HCV propagation. In terms of biological role, induces a specific membrane alteration that serves as a scaffold for the virus replication complex. This membrane alteration gives rise to the so-called ER-derived membranous web that contains the replication complex. NS4B self-interaction contributes to its function in membranous web formation. Promotes host TRIF protein degradation in a CASP8-dependent manner thereby inhibiting host TLR3-mediated interferon signaling. Disrupts the interaction between STING and TBK1 contributing to the inhibition of interferon signaling. Functionally, phosphorylated protein that is indispensable for viral replication and assembly. Both hypo- and hyperphosphorylated states are required for the viral life cycle. The hyperphosphorylated form of NS5A is an inhibitor of viral replication. Involved in RNA-binding and especially in binding to the viral genome. Zinc is essential for RNA-binding. Participates in the viral particle production as a result of its interaction with the mature viral core protein. Its interaction with host VAPB may target the viral replication complex to vesicles. Down-regulates viral IRES translation initiation. Mediates interferon resistance, presumably by interacting with and inhibiting host EIF2AK2/PKR. Prevents BIN1-induced apoptosis. Acts as a transcriptional activator of some host genes important for viral replication when localized in the nucleus. Via the interaction with host PACSIN2, modulates lipid droplet formation in order to promote virion assembly. Modulates TNFRSF21/DR6 signaling pathway for viral propagation. Its function is as follows. RNA-dependent RNA polymerase that performs primer-template recognition and RNA synthesis during viral replication. Initiates RNA transcription/replication at a flavin adenine dinucleotide (FAD), resulting in a 5'- FAD cap on viral RNAs. In this way, recognition of viral 5' RNA by host pattern recognition receptors can be bypassed, thereby evading activation of antiviral pathways. This Homo sapiens (Human) protein is Genome polyprotein.